We begin with the raw amino-acid sequence, 1408 residues long: MSASPGLTAAAAGPDHLQARRDEKVIDSEKDALAHDAHAVNSGIPYPTATAPNVGAPTVPISVGRVSSAAEGKISRSSIAASSDTLRNSPLEKPISNAFSKSHPYKKSKFDFLKSRKKKEEEERKNKEKEKEASVLPPVSFFALFRFAAPLEIIAMVLGLVLAVAAGSCQPLMTLIFGRLTTSFTNYAVIANQISQGGLTPETSAALQAAKDDLKTQSGHNALYLMAIGIGMFLATWLYMFIWNVTGELNSKRIRERYLAAVLRQEIAYFDDLGAGEVATRIQTDCHLVQEGTSEKVALVFQYAGTFVCGFVLAFVRSPRLAGALVSILPVIMLCGGIMMTAMAKYGTAALDHIAKAGSLAEEVIGSIRTVQAFGKEKILGDKFADHIEQSKIVGRKGSIFEGFGLSIMFFVIYAAYALAFFYGGILVSNGQADSGIVINVFMSILIGSFSMAMLAPELAAVTKARGAAAKLFATIDRVPAIDSASEEGFKPDGLRGEISFENVKFHYPSRPSIPILKGFTTTFEAGKTFALVGASGSGKSTVVSLIERFYDPVSGVVKLDGRDIRSLNLNWLRQQIGLVSQEPTLFGTTVRGNVEHGLIGSRYENASLEEKFELVKKACVDANAHNFIMKLPQGYDTMVGERGMLLSGGQKQRVAIARAIVSDPRILLLDEATSALDTQSEGIVQDALDKASRGRTTITIAHRLSTIRDADRIYVMGGGEVLEQGSHNDLLANENGPYAQLVNNQKLAQEAAAEALQVDDDIEDPDDAVFIGGSSPMQEKDKQLHRAVTGRSLASIAMDDIQAKRAEEVAGEDKIPSSFGLYARLLRMNSADKFIYIIAFIAAICAGMVYPSLAILFGKALSDFEIQDPAELRHALSRSALWYFITALAAAFVIFFQSAGFSRAGWDLNGVLRKKLFTATLRHDIEWFDEERNSTGAVTSNLADQPQKVQGLFGPTLGTVVQSCATLIGGCIIGLCYGPLLALIGIACIPILVSGGYIRLKVVVLKDQRMKKLHAASAHLASEAAGAVKTVASLTREKDVRRIYSEALKAPMKLNFRTSIKSQCLFAASQGLTFCIIALVFYIGALWIIDAKYSTASFYTVLNSIVFASIQAGNVFTFVPDASKANSSAASIFRSIDNEPAINAESNEGKVLDHKHVVGHVRIEGVHFRYPTRPGVRVLRNLTIDVPAGTYVALVGPSGCGKSTTIQMLERFYDPLAGRVTLDGIDIKELNLASYRSQISLVSQEPTLYAGTIRFNILLGANKPIEEVTQDEIDAACKDANIYDFIVSLPDGFDTEVGGKGSQLSGGQKQRIAIARALIRNPKVLLLDEATSALDSQSEKVVQEALDKAAKGRTTIAIAHRLSSIQHSDRIYYFSEGRVAEHGTHQELLAKKGGYYELVQMQNLSRQ.

Residues 79–88 are compositionally biased toward polar residues; it reads IAASSDTLRN. Positions 79–102 are disordered; sequence IAASSDTLRNSPLEKPISNAFSKS. Transmembrane regions (helical) follow at residues 147–167 and 223–243; these read FAAP…VAAG and LYLM…MFIW. One can recognise an ABC transmembrane type-1 1 domain in the interval 157-464; it reads VLGLVLAVAA…LAPELAAVTK (308 aa). Asparagine 244 carries an N-linked (GlcNAc...) asparagine glycan. Helical transmembrane passes span 296 to 316, 321 to 341, 408 to 428, and 436 to 456; these read KVAL…LAFV, LAGA…IMMT, IMFF…GILV, and GIVI…AMLA. The region spanning 499 to 744 is the ABC transporter 1 domain; the sequence is ISFENVKFHY…ENGPYAQLVN (246 aa). 534-541 is a binding site for ATP; it reads GASGSGKS. N-linked (GlcNAc...) asparagine glycosylation is present at asparagine 606. The next 2 membrane-spanning stretches (helical) occupy residues 838 to 858 and 882 to 902; these read IIAF…AILF and LWYF…SAGF. Positions 838–1125 constitute an ABC transmembrane type-1 2 domain; the sequence is IIAFIAAICA…VFTFVPDASK (288 aa). N-linked (GlcNAc...) asparagine glycosylation is present at asparagine 934. The next 4 membrane-spanning stretches (helical) occupy residues 952-972, 981-999, 1072-1092, and 1099-1119; these read GLFG…IGGC, LLAL…GGYI, GLTF…IIDA, and FYTV…VFTF. N-linked (GlcNAc...) asparagine glycans are attached at residues asparagine 1127 and asparagine 1182. Positions 1162–1402 constitute an ABC transporter 2 domain; sequence VRIEGVHFRY…KGGYYELVQM (241 aa). 1197–1204 is an ATP binding site; it reads GPSGCGKS. The N-linked (GlcNAc...) asparagine glycan is linked to asparagine 1404.

Belongs to the ABC transporter superfamily. ABCB family. Multidrug resistance exporter (TC 3.A.1.201) subfamily.

It is found in the cell membrane. It catalyses the reaction itraconazole(in) + ATP + H2O = itraconazole(out) + ADP + phosphate + H(+). The enzyme catalyses voriconazole(in) + ATP + H2O = voriconazole(out) + ADP + phosphate + H(+). It carries out the reaction fluconazole(in) + ATP + H2O = fluconazole(out) + ADP + phosphate + H(+). In terms of biological role, pleiotropic ABC efflux transporter that confers resistance to structurally and functionally unrelated compounds including azoles such as fluconazole (FLC), itraconazole (ITC), posaconazole (POS), and voriconazole (VRC). The chain is ABC multidrug transporter MDR1 from Cryptococcus neoformans var. grubii serotype A (strain H99 / ATCC 208821 / CBS 10515 / FGSC 9487) (Filobasidiella neoformans var. grubii).